The chain runs to 384 residues: S-adenosylmethionine synthase (384 aa).

His-15 is a binding site for ATP. Residue Asp-17 coordinates Mg(2+). K(+) is bound at residue Glu-43. Residues Glu-56 and Gln-99 each contribute to the L-methionine site. Positions 99-109 (QSPDINQGVDR) are flexible loop. Residues 164-166 (DAK), 231-232 (RF), Asp-240, 246-247 (RK), Ala-263, and Lys-267 each bind ATP. Residue Asp-240 coordinates L-methionine. L-methionine is bound at residue Lys-271.

The protein belongs to the AdoMet synthase family. Homotetramer; dimer of dimers. Mg(2+) is required as a cofactor. The cofactor is K(+).

The protein localises to the cytoplasm. It catalyses the reaction L-methionine + ATP + H2O = S-adenosyl-L-methionine + phosphate + diphosphate. It functions in the pathway amino-acid biosynthesis; S-adenosyl-L-methionine biosynthesis; S-adenosyl-L-methionine from L-methionine: step 1/1. In terms of biological role, catalyzes the formation of S-adenosylmethionine (AdoMet) from methionine and ATP. The overall synthetic reaction is composed of two sequential steps, AdoMet formation and the subsequent tripolyphosphate hydrolysis which occurs prior to release of AdoMet from the enzyme. The polypeptide is S-adenosylmethionine synthase (Shewanella pealeana (strain ATCC 700345 / ANG-SQ1)).